We begin with the raw amino-acid sequence, 479 residues long: Aspartyl/glutamyl-tRNA(Asn/Gln) amidotransferase subunit B (479 aa).

The protein belongs to the GatB/GatE family. GatB subfamily. Heterotrimer of A, B and C subunits.

It catalyses the reaction L-glutamyl-tRNA(Gln) + L-glutamine + ATP + H2O = L-glutaminyl-tRNA(Gln) + L-glutamate + ADP + phosphate + H(+). The enzyme catalyses L-aspartyl-tRNA(Asn) + L-glutamine + ATP + H2O = L-asparaginyl-tRNA(Asn) + L-glutamate + ADP + phosphate + 2 H(+). In terms of biological role, allows the formation of correctly charged Asn-tRNA(Asn) or Gln-tRNA(Gln) through the transamidation of misacylated Asp-tRNA(Asn) or Glu-tRNA(Gln) in organisms which lack either or both of asparaginyl-tRNA or glutaminyl-tRNA synthetases. The reaction takes place in the presence of glutamine and ATP through an activated phospho-Asp-tRNA(Asn) or phospho-Glu-tRNA(Gln). The polypeptide is Aspartyl/glutamyl-tRNA(Asn/Gln) amidotransferase subunit B (Mycoplasma mycoides subsp. mycoides SC (strain CCUG 32753 / NCTC 10114 / PG1)).